The following is a 287-amino-acid chain: 3-methyl-2-oxobutanoate hydroxymethyltransferase (287 aa).

Residues aspartate 67 and aspartate 106 each coordinate Mg(2+). Residues 67–68 (DS), aspartate 106, and lysine 136 each bind 3-methyl-2-oxobutanoate. Glutamate 138 contributes to the Mg(2+) binding site. Glutamate 204 (proton acceptor) is an active-site residue.

It belongs to the PanB family. Homodecamer; pentamer of dimers. It depends on Mg(2+) as a cofactor.

The protein localises to the cytoplasm. The enzyme catalyses 3-methyl-2-oxobutanoate + (6R)-5,10-methylene-5,6,7,8-tetrahydrofolate + H2O = 2-dehydropantoate + (6S)-5,6,7,8-tetrahydrofolate. It participates in cofactor biosynthesis; (R)-pantothenate biosynthesis; (R)-pantoate from 3-methyl-2-oxobutanoate: step 1/2. Its function is as follows. Catalyzes the reversible reaction in which hydroxymethyl group from 5,10-methylenetetrahydrofolate is transferred onto alpha-ketoisovalerate to form ketopantoate. The chain is 3-methyl-2-oxobutanoate hydroxymethyltransferase from Streptomyces avermitilis (strain ATCC 31267 / DSM 46492 / JCM 5070 / NBRC 14893 / NCIMB 12804 / NRRL 8165 / MA-4680).